Here is a 359-residue protein sequence, read N- to C-terminus: Protein-arginine kinase (359 aa).

The region spanning 25-257 (IVISSRVRLA…QQVIEQERML (233 aa)) is the Phosphagen kinase C-terminal domain. Residues 28–32 (SSRVR), H93, R128, 179–183 (RASLM), and 210–215 (RGIYGE) contribute to the ATP site. An RDXXRA motif of the pArg binding pocket involved in allosteric regulation motif is present at residues 340–345 (RDAKRA).

It belongs to the ATP:guanido phosphotransferase family.

It catalyses the reaction L-arginyl-[protein] + ATP = N(omega)-phospho-L-arginyl-[protein] + ADP + H(+). Its activity is regulated as follows. Appears to be allosterically activated by the binding of pArg-containing polypeptides to the pArg-binding pocket localized in the C-terminal domain of McsB. Functionally, catalyzes the specific phosphorylation of arginine residues in proteins. In Syntrophomonas wolfei subsp. wolfei (strain DSM 2245B / Goettingen), this protein is Protein-arginine kinase.